Consider the following 159-residue polypeptide: Transcriptional repressor NrdR (159 aa).

A zinc finger spans residues 3-34 (CPFCRHDDTQVVDSRVSEDGAAIRRRRRCSAC). Positions 49–139 (PAVVKKDGSR…VYRRFEDVSE (91 aa)) constitute an ATP-cone domain.

Belongs to the NrdR family. The cofactor is Zn(2+).

Its function is as follows. Negatively regulates transcription of bacterial ribonucleotide reductase nrd genes and operons by binding to NrdR-boxes. The protein is Transcriptional repressor NrdR of Burkholderia pseudomallei (strain 1106a).